The sequence spans 514 residues: 1-pyrroline-5-carboxylate dehydrogenase (514 aa).

Active-site residues include E286 and C320.

Belongs to the aldehyde dehydrogenase family. RocA subfamily.

The catalysed reaction is L-glutamate 5-semialdehyde + NAD(+) + H2O = L-glutamate + NADH + 2 H(+). It participates in amino-acid degradation; L-proline degradation into L-glutamate; L-glutamate from L-proline: step 2/2. This Staphylococcus saprophyticus subsp. saprophyticus (strain ATCC 15305 / DSM 20229 / NCIMB 8711 / NCTC 7292 / S-41) protein is 1-pyrroline-5-carboxylate dehydrogenase.